Here is a 225-residue protein sequence, read N- to C-terminus: Small ribosomal subunit protein uS2 (225 aa).

Residues 1-14 (MAEAKPAPEKEAAA) are compositionally biased toward basic and acidic residues. The interval 1–33 (MAEAKPAPEKEAAAKTESVPVETEGEGPSVKEG) is disordered.

It belongs to the universal ribosomal protein uS2 family.

This is Small ribosomal subunit protein uS2 from Methanosarcina barkeri (strain Fusaro / DSM 804).